A 125-amino-acid polypeptide reads, in one-letter code: Kappa-casein (125 aa).

The segment at 42–63 is disordered; the sequence is LPNIDPPTVERRPRPRPSFIAI. A glycan (O-linked (GalNAc...) threonine) is linked at Thr-97. Ser-104 bears the Phosphoserine; alternate mark. Residue Ser-104 is glycosylated (O-linked (GalNAc...) serine; alternate). The O-linked (GalNAc...) threonine glycan is linked to Thr-121. A Phosphoserine modification is found at Ser-122.

It belongs to the kappa-casein family. Mammary gland specific. Secreted in milk.

The protein resides in the secreted. In terms of biological role, kappa-casein stabilizes micelle formation, preventing casein precipitation in milk. In Lama guanicoe (Guanaco), this protein is Kappa-casein (CSN3).